The sequence spans 313 residues: Potassium channel subfamily K member 6 (313 aa).

Topologically, residues 1–4 (MRRG) are cytoplasmic. Residues 5–25 (ALLAGALAAYAAYLVLGALLV) form a helical membrane-spanning segment. N-linked (GlcNAc...) asparagine glycosylation is found at Asn79 and Asn85. Residues 90 to 115 (AWDFASALFFASTLITTVGYGYTTPL) constitute an intramembrane region (pore-forming). K(+) contacts are provided by Thr106, Val107, Gly108, and Tyr109. The interval 106–111 (TVGYGY) is selectivity filter 1. Residues 121-141 (AFSIAFALLGVPTTMLLLTAS) form a helical membrane-spanning segment. Topologically, residues 142–172 (AQRLSLLLTHVPLSWLSMRWGWDPRRAACWH) are cytoplasmic. Residues 173-193 (LVALLGVVVTVCFLVPAVIFA) traverse the membrane as a helical segment. Positions 199–223 (WSFLDAFYFCFISLSTIGLGDYVPG) form an intramembrane region, pore-forming. K(+)-binding residues include Thr214, Ile215, and Gly216. The selectivity filter 2 stretch occupies residues 214–219 (TIGLGD). Residues 236 to 256 (VLVTVYLFLGLVAMVLVLQTF) traverse the membrane as a helical segment. Topologically, residues 257-313 (RHVSDLHGLTELILLPPPCPASFNADEDDRVDILGPQPESHQQLSASSHTDYASIPR) are cytoplasmic. Positions 282–290 (DEDDRVDIL) match the Lysosomal targeting signal motif. Positions 288–313 (DILGPQPESHQQLSASSHTDYASIPR) are disordered. Residues 295-307 (ESHQQLSASSHTD) are compositionally biased toward polar residues. Positions 308-312 (YASIP) match the Lysosomal targeting signal motif.

The protein belongs to the two pore domain potassium channel (TC 1.A.1.8) family. In terms of assembly, homodimer; disulfide-linked. In terms of processing, N-glycosylation is necessary for targeting to lysosomes. In terms of tissue distribution, widespread expression, detected in all tissues tested except for skeletal muscle. Strongest expression in placenta, pancreas, heart, colon and spleen, lower levels detected in peripheral blood leukocytes, lung, liver, kidney and thymus. Lowest expression detected in brain.

It is found in the late endosome membrane. The protein localises to the lysosome membrane. It carries out the reaction K(+)(in) = K(+)(out). In terms of biological role, k(+) channel that conducts outward rectifying currents at the membranes of the endolysosomal system. Active in lysosomes where it regulates lysosome numbers and size. In macrophages, enables K(+) efflux coupled to ATP-induced NLRP3 inflammasome activation upon bacterial infection. Cooperates with ATP-gated P2RX7 channels to activate NLRP3 inflammasome, with P2RX7 conducting Ca(2+) and Na(+) influx that sets the membrane potential for K(+) efflux. Its function is as follows. Does not display channel activity. The sequence is that of Potassium channel subfamily K member 6 from Homo sapiens (Human).